A 910-amino-acid polypeptide reads, in one-letter code: Eukaryotic translation initiation factor 3 subunit C (910 aa).

A disordered region spans residues 1-21; the sequence is MSRFFANGSDSESESSEDEIQ. The segment covering 11-20 has biased composition (acidic residues); sequence SESESSEDEI. A phosphoserine mark is found at Ser34, Ser165, Ser176, and Ser185. Residues 157-281 are disordered; it reads FREAPDQESE…KRAEDDEDGE (125 aa). Residues 162-186 are compositionally biased toward acidic residues; that stretch reads DQESEAEDEVVAQESDGGDAGDDSD. Low complexity predominate over residues 193-207; that stretch reads EAAPKAVKSAPAKAA. Acidic residues predominate over residues 209–235; that stretch reads ADDDDSDDSIDWDSDSESETESSDDEN. Residues 240 to 268 show a composition bias toward basic and acidic residues; that stretch reads MRERFLKRTTEKEEKDDDKRKDKRKEQKV. Residues 639-815 enclose the PCI domain; it reads FHMHINLELL…ETVVMHRSEP (177 aa). Residues 847 to 910 form a disordered region; that stretch reads FFQRGNMGNR…QQQVQTIDEE (64 aa). A compositionally biased stretch (low complexity) spans 862–874; it reads NRNQNNQGGNWLG. A compositionally biased stretch (basic residues) spans 882–891; that stretch reads RNRNQRGHHK. Residues 895-910 are compositionally biased toward low complexity; it reads DRQQQQQQQVQTIDEE.

This sequence belongs to the eIF-3 subunit C family. Component of the eukaryotic translation initiation factor 3 (eIF-3) complex. The eIF-3 complex interacts with pix.

It is found in the cytoplasm. Component of the eukaryotic translation initiation factor 3 (eIF-3) complex, which is involved in protein synthesis of a specialized repertoire of mRNAs and, together with other initiation factors, stimulates binding of mRNA and methionyl-tRNAi to the 40S ribosome. The eIF-3 complex specifically targets and initiates translation of a subset of mRNAs involved in cell proliferation. The sequence is that of Eukaryotic translation initiation factor 3 subunit C from Drosophila yakuba (Fruit fly).